The chain runs to 130 residues: Small ribosomal subunit protein uS9 (130 aa).

The protein belongs to the universal ribosomal protein uS9 family.

The polypeptide is Small ribosomal subunit protein uS9 (Colwellia psychrerythraea (strain 34H / ATCC BAA-681) (Vibrio psychroerythus)).